The primary structure comprises 277 residues: Odontogenic ameloblast-associated protein (277 aa).

The signal sequence occupies residues 1–15; it reads MRTLILLGILGATMS. Positions 103–124 are disordered; sequence TQAGQLDPSQPQTPQQTQRGPK. An O-linked (GalNAc...) threonine glycan is attached at T115. An interaction with ARHGEF5 region spans residues 127–129; it reads MPS. 3 O-linked (GalNAc...) threonine glycosylation sites follow: T208, T248, and T271.

This sequence belongs to the ODAM family. As to quaternary structure, interacts (via C-terminus) with ARHGEF5. Post-translationally, O-glycosylated.

The protein localises to the secreted. Its subcellular location is the cytoplasm. It is found in the nucleus. Its function is as follows. Tooth-associated epithelia protein that probably plays a role in odontogenesis, the complex process that results in the initiation and generation of the tooth. May be incorporated in the enamel matrix at the end of mineralization process. Involved in the induction of RHOA activity via interaction with ARHGEF and expression of downstream factors such as ROCK. Plays a role in attachment of the junctional epithelium to the tooth surface. The protein is Odontogenic ameloblast-associated protein (ODAM) of Bos taurus (Bovine).